The chain runs to 119 residues: Holo-[acyl-carrier-protein] synthase (119 aa).

Mg(2+)-binding residues include D8 and E58.

Belongs to the P-Pant transferase superfamily. AcpS family. Mg(2+) serves as cofactor.

Its subcellular location is the cytoplasm. It catalyses the reaction apo-[ACP] + CoA = holo-[ACP] + adenosine 3',5'-bisphosphate + H(+). Functionally, transfers the 4'-phosphopantetheine moiety from coenzyme A to a Ser of acyl-carrier-protein. In Streptococcus thermophilus (strain ATCC BAA-491 / LMD-9), this protein is Holo-[acyl-carrier-protein] synthase.